A 104-amino-acid chain; its full sequence is Transcription initiation factor IIA subunit 2 (104 aa).

It belongs to the TFIIA subunit 2 family. TFIIA is a heterodimer of the large unprocessed subunit 1 and a small subunit gamma.

It is found in the nucleus. Functionally, TFIIA is a component of the transcription machinery of RNA polymerase II and plays an important role in transcriptional activation. TFIIA in a complex with TBP mediates transcriptional activity. The protein is Transcription initiation factor IIA subunit 2 of Schistosoma mansoni (Blood fluke).